A 410-amino-acid chain; its full sequence is MPLHVEILSTGDELLTGQVVDTNSTWLMDRLWDLGVMVRRKTLVGDDRADLDAALRETSGRSDLVVVSGGMGPTEDDLTSERVAAVLGVPLELHEPSLRALEERFRKFGRAMTPNNEKQARFPRGAEVIPNRFGSAPGFAVRIGRAEVVCFPGVPVEYRGLADEWLLPRVAARLGEVPASRLLKLFAVPESHADHAMRPVMDDPANEGVRFGFRAHWPEVHVKWTVPGPGADARAARIAAAVRGIFGDAVFGEAKEELPALVVARLAARGERVALAESCTGGLLAELVTGVPGASAVIDLGVVAYANAMKEAVLGVPAPLLAAHGAVSEPVARALAEGARRAGRATWGLGITGIAGPTGGTPEKPVGTVHVALAGPGGTTAVERLYRGDRERIRKTAAFEALNLLRLALR.

The protein belongs to the CinA family.

This Anaeromyxobacter sp. (strain Fw109-5) protein is CinA-like protein.